Reading from the N-terminus, the 249-residue chain is MKFYKYCASGNDFVITNADRKEDRSALAKELCNRYEGIGADGFIVILPHEKYDFEWEFYNNDGSRAAMCGNGSRAAAHFAHHINKINPNMSFLTGAGVIKAKVNQDKVEVSLGKIKSVQNTFEELGKTWQLCNTGVPHLVHFCQNLDEFDTMLCQKMRQKYNANVNFVKILDENHLKVRTYERGVEDETLACGTGMGACFYLAFLNKKVQNKVKITPKSGEEVGFAYKNEELFFEGKVKYCFEANYNFS.

The substrate site is built by N11 and N60. C69 functions as the Proton donor in the catalytic mechanism. Substrate is bound by residues 70–71 (GN), N164, and 182–183 (ER). Residue C192 is the Proton acceptor of the active site. 193-194 (GT) contributes to the substrate binding site.

It belongs to the diaminopimelate epimerase family. Homodimer.

It localises to the cytoplasm. It carries out the reaction (2S,6S)-2,6-diaminopimelate = meso-2,6-diaminopimelate. It functions in the pathway amino-acid biosynthesis; L-lysine biosynthesis via DAP pathway; DL-2,6-diaminopimelate from LL-2,6-diaminopimelate: step 1/1. In terms of biological role, catalyzes the stereoinversion of LL-2,6-diaminopimelate (L,L-DAP) to meso-diaminopimelate (meso-DAP), a precursor of L-lysine and an essential component of the bacterial peptidoglycan. The protein is Diaminopimelate epimerase of Campylobacter jejuni subsp. jejuni serotype O:23/36 (strain 81-176).